A 207-amino-acid polypeptide reads, in one-letter code: Vexin (207 aa).

The segment at 65-104 is disordered; that stretch reads RDTGDRRWLQTGRLQTARPPGAHPTKTPSRPVGISEPKTS.

The protein belongs to the vexin family.

The protein localises to the cell membrane. Its subcellular location is the nucleus. Required for neurogenesis in the neural plate and retina. Strongly cooperates with neural bHLH factors to promote neurogenesis. The protein is Vexin of Mus musculus (Mouse).